The following is a 342-amino-acid chain: MNSLVALVLLGQIIGSTLSSQVRGDLECDDKEAKNWADDAVRYINEHKLHGHKQALNVIKNICVVPWNGDLVAVFLELNLLETECHVLDPTPVEKCTVRQQHNHAVEMDCDAKIMFNVETFKRDVFVKCHSTPDSVENVRRNCSKCPILLPPNNPHVVDSVEYVLNKHNEKLSGHIYEVLEISRGQHKYEPEAYYLEFVIVEINCTAQEAHDDHHQCHPYTAGEDHIAFCRSTVFRSHASLEKPKDEKFESNCVILDVKDGHAHSHLIQQHIEKNSISPEHNITILNFVHPDDHTSTSHESHEHVAEVPVVFVKKELPTDISDHHTTPVKGCPGKVHHFKLY.

An N-terminal signal peptide occupies residues 1-19 (MNSLVALVLLGQIIGSTLS). 2 Cystatin fetuin-A-type domains span residues 22-130 (VRGD…VKCH) and 141-254 (RNCS…SNCV). Positions 23-25 (RGD) match the Cell attachment site motif. Residues 24–108 (GDLECDDKEA…RQQHNHAVEM (85 aa)) form an indispensable for metalloproteinase inhibition region. Disulfide bonds link C28-C332, C85-C96, C110-C129, C143-C146, C205-C217, and C230-C253. N142 carries an N-linked (GlcNAc...) asparagine glycan. N204 carries an N-linked (GlcNAc...) asparagine glycan. Residue N282 is glycosylated (N-linked (GlcNAc...) asparagine).

Belongs to the fetuin family. Cys-63 may exist in a mixed disulfide form with a thiol compound such as glutathione. As to expression, expressed by the liver.

It localises to the secreted. Its function is as follows. Inhibits hemorrhagic and proteolytic activities of metalloproteinases (HR1A, HR1B, HR2a, HR2b and H2 proteinase from T.flavodidis and brevilysins H3, H4, H6 and L4 from A.halys brevicaudus). Has no effect on brevilysins H2. Has no effect on papain and cathepsin-B. This chain is Antihemorrhagic factor HSF, found in Protobothrops flavoviridis (Habu).